Consider the following 260-residue polypeptide: Methyl-coenzyme M reductase I subunit gamma (260 aa).

Arg123 contacts coenzyme M.

This sequence belongs to the methyl-coenzyme M reductase gamma subunit family. As to quaternary structure, MCR is a hexamer of two alpha, two beta, and two gamma chains, forming a dimer of heterotrimers. Coenzyme F430 serves as cofactor.

The protein resides in the cytoplasm. The enzyme catalyses coenzyme B + methyl-coenzyme M = methane + coenzyme M-coenzyme B heterodisulfide. Its pathway is one-carbon metabolism; methyl-coenzyme M reduction; methane from methyl-coenzyme M: step 1/1. In terms of biological role, component of the methyl-coenzyme M reductase (MCR) I that catalyzes the reductive cleavage of methyl-coenzyme M (CoM-S-CH3 or 2-(methylthio)ethanesulfonate) using coenzyme B (CoB or 7-mercaptoheptanoylthreonine phosphate) as reductant which results in the production of methane and the mixed heterodisulfide of CoB and CoM (CoM-S-S-CoB). This is the final step in methanogenesis. This Methanocaldococcus jannaschii (strain ATCC 43067 / DSM 2661 / JAL-1 / JCM 10045 / NBRC 100440) (Methanococcus jannaschii) protein is Methyl-coenzyme M reductase I subunit gamma (mcrG).